Consider the following 757-residue polypeptide: POU domain, class 2, transcription factor 1 (757 aa).

Disordered regions lie at residues 1-43 (MKLH…QTNG), 271-295 (AATP…SLEE), 375-398 (SLSN…RRKK), and 532-574 (VSSV…TSPL). Composition is skewed to polar residues over residues 19-43 (RMNN…QTNG) and 275-285 (VQQLPQSQTTP). Positions 294-368 (EEPSDLEELE…LLEKWLNDAE (75 aa)) constitute a POU-specific domain. Positions 395-454 (RRKKRTSIETNIRVALEKSFLENQKPTSEEITMIADQLNMEKEVIRVWFCNRRQKEKRIN) form a DNA-binding region, homeobox.

Belongs to the POU transcription factor family. Class-2 subfamily.

Its subcellular location is the cytoplasm. The protein resides in the nucleus. Transcription factor that binds to the octamer motif (5'-ATTTGCAT-3') and activates the promoters of the genes for some small nuclear RNAs (snRNA) and histone H2B. Acts downstream of Notch signaling during radial glia formation. Regulates apoptosis, possibly via an FGF-signaling pathway. The polypeptide is POU domain, class 2, transcription factor 1 (Xenopus tropicalis (Western clawed frog)).